We begin with the raw amino-acid sequence, 143 residues long: Transcriptional regulator MraZ (143 aa).

2 SpoVT-AbrB domains span residues 5 to 47 (TYTP…PREE) and 76 to 119 (TDEQ…DAQA).

The protein belongs to the MraZ family. As to quaternary structure, forms oligomers.

The protein resides in the cytoplasm. Its subcellular location is the nucleoid. The polypeptide is Transcriptional regulator MraZ (Rhodococcus jostii (strain RHA1)).